The chain runs to 97 residues: Integration host factor subunit alpha (97 aa).

The disordered stretch occupies residues 50-71 (FGNFTLRDKPQRPGRNPKTGEE).

The protein belongs to the bacterial histone-like protein family. Heterodimer of an alpha and a beta chain.

This protein is one of the two subunits of integration host factor, a specific DNA-binding protein that functions in genetic recombination as well as in transcriptional and translational control. The sequence is that of Integration host factor subunit alpha from Legionella pneumophila (strain Paris).